Reading from the N-terminus, the 96-residue chain is C-C motif chemokine 20 (96 aa).

An N-terminal signal peptide occupies residues Met-1 to Glu-26. 2 cysteine pairs are disulfide-bonded: Cys-32/Cys-58 and Cys-33/Cys-74.

The protein belongs to the intercrine beta (chemokine CC) family.

The protein localises to the secreted. Its function is as follows. Acts as a ligand for C-C chemokine receptor CCR6. Signals through binding and activation of CCR6 and induces a strong chemotactic response and mobilization of intracellular calcium ions. The ligand-receptor pair CCL20-CCR6 is responsible for the chemotaxis of dendritic cells (DC), effector/memory T-cells and B-cells and plays an important role at skin and mucosal surfaces under homeostatic and inflammatory conditions, as well as in pathology, including cancer and autoimmune diseases. CCL20 acts as a chemotactic factor that attracts lymphocytes and, slightly, neutrophils, but not monocytes. Involved in the recruitment of both the pro-inflammatory IL17 producing helper T-cells (Th17) and the regulatory T-cells (Treg) to sites of inflammation. Required for optimal migration of thymic natural regulatory T cells (nTregs) and DN1 early thymocyte progenitor cells. Positively regulates sperm motility and chemotaxis via its binding to CCR6 which triggers Ca2+ mobilization in the sperm which is important for its motility. May be involved in formation and function of the mucosal lymphoid tissues by attracting lymphocytes and dendritic cells towards epithelial cells. This chain is C-C motif chemokine 20 (CCL20), found in Bos taurus (Bovine).